We begin with the raw amino-acid sequence, 357 residues long: DENN domain-containing protein 10 (357 aa).

Residues 1 to 136 (MAAVVAMDTQ…IAVLTKGICQ (136 aa)) form the uDENN domain. One can recognise a cDENN domain in the interval 152–299 (KAYLAGSIKD…PEKSDSQVIQ (148 aa)). The dDENN domain maps to 301–357 (IALKTKEIFTHLAPFSEVSDDGGKVILNVEALKQQRFPPATENFLYHLAAAEQMLKV).

This sequence belongs to the DENND10 family. In terms of assembly, interacts with the coiled-coil heterodimer of CCDC22 and CCDC93; the interaction is direct. Interacts with RAB27A and RAB27B (GDP-bound forms preferentially).

The protein localises to the late endosome. Functionally, guanine nucleotide exchange factor (GEF) regulating homeostasis of late endocytic pathway, including endosomal positioning, maturation and secretion, possibly through activating Rab proteins such as RAB27A and RAB27B. Promotes the exchange of GDP to GTP, converting inactive GDP-bound RAB27A and RAB27B into their active GTP-bound form. This chain is DENN domain-containing protein 10, found in Mus musculus (Mouse).